The following is a 284-amino-acid chain: 4-hydroxybenzoate octaprenyltransferase (284 aa).

A run of 9 helical transmembrane segments spans residues 19–39 (IPIL…SHGL), 42–62 (ISYL…GCII), 85–105 (GQLS…VAFI), 107–127 (VLFL…LAIL), 134–154 (FFAI…FMAF), 165–185 (AWIF…IYAL), 211–231 (ILLF…YCDF), 233–253 (SFFY…YFLY), and 261–281 (CINA…MAVI).

This sequence belongs to the UbiA prenyltransferase family. Mg(2+) serves as cofactor.

It localises to the cell inner membrane. The catalysed reaction is all-trans-octaprenyl diphosphate + 4-hydroxybenzoate = 4-hydroxy-3-(all-trans-octaprenyl)benzoate + diphosphate. The protein operates within cofactor biosynthesis; ubiquinone biosynthesis. Its function is as follows. Catalyzes the prenylation of para-hydroxybenzoate (PHB) with an all-trans polyprenyl group. Mediates the second step in the final reaction sequence of ubiquinone-8 (UQ-8) biosynthesis, which is the condensation of the polyisoprenoid side chain with PHB, generating the first membrane-bound Q intermediate 3-octaprenyl-4-hydroxybenzoate. This is 4-hydroxybenzoate octaprenyltransferase from Francisella tularensis subsp. novicida (strain U112).